The chain runs to 98 residues: MALTKAEMSENLFEKLGISKRDAKDLVELFFEEVRRSLENGEQVKLSGFGNFDLRDKNQRPGRNPKTGEDIPITARRVVTFRPGQKLKSRVEKATPKE.

The disordered stretch occupies residues phenylalanine 52–isoleucine 71.

It belongs to the bacterial histone-like protein family. As to quaternary structure, heterodimer of an alpha and a beta chain.

Its function is as follows. This protein is one of the two subunits of integration host factor, a specific DNA-binding protein that functions in genetic recombination as well as in transcriptional and translational control. This is Integration host factor subunit alpha from Photorhabdus laumondii subsp. laumondii (strain DSM 15139 / CIP 105565 / TT01) (Photorhabdus luminescens subsp. laumondii).